Consider the following 156-residue polypeptide: MPRRREVPKREILPDPKYHNVELAKFVNVLMTRGKKSIAEQIIYGALSHVEKKSGKDPVEVFTQALSNIRPVVEVKSRRVGGANYQVPVEVRSVRRSALAMRWLRDAARKRSEKSMDLRLAGELLEASENRGTAIKKREEVHRMAESNKAFSHFRF.

This sequence belongs to the universal ribosomal protein uS7 family. In terms of assembly, part of the 30S ribosomal subunit. Contacts proteins S9 and S11.

In terms of biological role, one of the primary rRNA binding proteins, it binds directly to 16S rRNA where it nucleates assembly of the head domain of the 30S subunit. Is located at the subunit interface close to the decoding center, probably blocks exit of the E-site tRNA. The polypeptide is Small ribosomal subunit protein uS7 (Nitrosomonas eutropha (strain DSM 101675 / C91 / Nm57)).